The following is a 147-amino-acid chain: Plasminogen receptor (KT) (147 aa).

Residues 1 to 52 are Extracellular-facing; the sequence is MGFIFSKSMNESMKNQKEFMLMNARLQLERQLIMQSEMRERQMAMQIAWSRE. Residues 53–73 traverse the membrane as a helical segment; the sequence is FLKYFGTFFGLAAISLTAGAI. At 74-78 the chain is on the cytoplasmic side; sequence KKKKP. A helical transmembrane segment spans residues 79–99; that stretch reads AFLVPIVPLSFILTYQYDLGY. Over 100 to 147 the chain is Extracellular; that stretch reads GTLLERMKGEAEDILETEKSKLQLPRGMITFESIEKARKEQSRFFIDK.

Interacts with PLAT and PLAUR. As to expression, expressed in peripheral blood cells and monocytes. Expressed in adrenal medulla.

The protein resides in the cell membrane. Receptor for plasminogen. Regulates urokinase plasminogen activator-dependent and stimulates tissue-type plasminogen activator-dependent cell surface plasminogen activation. Proposed to be part of a local catecholaminergic cell plasminogen activation system that regulates neuroendocrine prohormone processing. Involved in regulation of inflammatory response; regulates monocyte chemotactic migration and matrix metalloproteinase activation, such as of MMP2 and MMP9. In Homo sapiens (Human), this protein is Plasminogen receptor (KT) (PLGRKT).